Consider the following 366-residue polypeptide: MAPKINKIVNGPIPDSFLADETKRLDSLKFDGQRLEVLDQLLLPHEFKYIPVNDVSDAFNVIKSMQVRGAPLIAVVGSLGLLLEFNKNSELNIETIREKIEYLITSRPTAVDLRNSVTGLIPILETEGITDDEKLAKCQEYLLNVYTAEKLQNRILLWNAYQELLTAFPGKEKFTVMTICNTGSLATVSWGTALGVIRALHSENRLNLAYVLETRPYNQGIRLTATELLHGQVPFKLITDSMAAWAMKNHQLDCVLVGADNVARNGDTANKIGTYMLAVLCKHHNINFYPVVPFTTINKNISSGEEIKIEERAASELLRVNGVLVGNSECPVWNPAFDVTPAHLITKILTDFGNWSPAALEEQIPR.

Aspartate 260 acts as the Proton donor in catalysis.

Belongs to the eIF-2B alpha/beta/delta subunits family. MtnA subfamily.

It is found in the cytoplasm. Its subcellular location is the nucleus. It catalyses the reaction 5-(methylsulfanyl)-alpha-D-ribose 1-phosphate = 5-(methylsulfanyl)-D-ribulose 1-phosphate. It functions in the pathway amino-acid biosynthesis; L-methionine biosynthesis via salvage pathway; L-methionine from S-methyl-5-thio-alpha-D-ribose 1-phosphate: step 1/6. Catalyzes the interconversion of methylthioribose-1-phosphate (MTR-1-P) into methylthioribulose-1-phosphate (MTRu-1-P). This is Methylthioribose-1-phosphate isomerase from Caenorhabditis briggsae.